A 197-amino-acid chain; its full sequence is A-type ATP synthase subunit E 2 (197 aa).

It belongs to the V-ATPase E subunit family. In terms of assembly, has multiple subunits with at least A(3), B(3), C, D, E, F, H, I and proteolipid K(x).

Its subcellular location is the cell membrane. Functionally, component of the A-type ATP synthase that produces ATP from ADP in the presence of a proton gradient across the membrane. The chain is A-type ATP synthase subunit E 2 from Methanospirillum hungatei JF-1 (strain ATCC 27890 / DSM 864 / NBRC 100397 / JF-1).